We begin with the raw amino-acid sequence, 184 residues long: NADH-quinone oxidoreductase subunit B (184 aa).

[4Fe-4S] cluster-binding residues include Cys-37, Cys-38, Cys-103, and Cys-132.

The protein belongs to the complex I 20 kDa subunit family. In terms of assembly, NDH-1 is composed of 14 different subunits. Subunits NuoB, C, D, E, F, and G constitute the peripheral sector of the complex. [4Fe-4S] cluster is required as a cofactor.

The protein resides in the cell membrane. The catalysed reaction is a quinone + NADH + 5 H(+)(in) = a quinol + NAD(+) + 4 H(+)(out). Its function is as follows. NDH-1 shuttles electrons from NADH, via FMN and iron-sulfur (Fe-S) centers, to quinones in the respiratory chain. The immediate electron acceptor for the enzyme in this species is believed to be a menaquinone. Couples the redox reaction to proton translocation (for every two electrons transferred, four hydrogen ions are translocated across the cytoplasmic membrane), and thus conserves the redox energy in a proton gradient. The polypeptide is NADH-quinone oxidoreductase subunit B (Mycobacterium marinum (strain ATCC BAA-535 / M)).